The chain runs to 352 residues: 3-dehydroquinate synthase (352 aa).

Residues 60 to 65 (DGEGAK), 118 to 119 (TT), lysine 131, lysine 140, and 158 to 161 (FLET) each bind NAD(+). Zn(2+) is bound by residues glutamate 173, histidine 237, and histidine 253.

It belongs to the sugar phosphate cyclases superfamily. Dehydroquinate synthase family. NAD(+) serves as cofactor. The cofactor is Co(2+). It depends on Zn(2+) as a cofactor.

The protein localises to the cytoplasm. It catalyses the reaction 7-phospho-2-dehydro-3-deoxy-D-arabino-heptonate = 3-dehydroquinate + phosphate. It functions in the pathway metabolic intermediate biosynthesis; chorismate biosynthesis; chorismate from D-erythrose 4-phosphate and phosphoenolpyruvate: step 2/7. Catalyzes the conversion of 3-deoxy-D-arabino-heptulosonate 7-phosphate (DAHP) to dehydroquinate (DHQ). The polypeptide is 3-dehydroquinate synthase (Sulfurisphaera tokodaii (strain DSM 16993 / JCM 10545 / NBRC 100140 / 7) (Sulfolobus tokodaii)).